The following is a 307-amino-acid chain: Shikimate kinase 2, chloroplastic (307 aa).

The N-terminal 60 residues, 1-60, are a transit peptide targeting the chloroplast; the sequence is MEARAGLAMQSRAAVGVGAGPGVGRRGRAVIRVGKRPTAASLRVGGPAGPAAAKPLAPLY. Residue 101-108 coordinates ATP; the sequence is GMMGSGKS. Ser-108 serves as a coordination point for Mg(2+). Asp-126, Arg-151, and Gly-173 together coordinate substrate. Arg-212 is an ATP binding site. The tract at residues 285–307 is disordered; sequence HSTSSGPVGDLIVDSQNRRTKAL.

This sequence belongs to the shikimate kinase family. Mg(2+) is required as a cofactor. In terms of tissue distribution, expressed in panicles.

It localises to the plastid. The protein resides in the chloroplast. It catalyses the reaction shikimate + ATP = 3-phosphoshikimate + ADP + H(+). The protein operates within metabolic intermediate biosynthesis; chorismate biosynthesis; chorismate from D-erythrose 4-phosphate and phosphoenolpyruvate: step 5/7. Functionally, catalyzes the specific phosphorylation of the 3-hydroxyl group of shikimic acid using ATP as a cosubstrate. This Oryza sativa subsp. japonica (Rice) protein is Shikimate kinase 2, chloroplastic (SK2).